Reading from the N-terminus, the 643-residue chain is Alpha-dioxygenase PIOX (643 aa).

Catalysis depends on His-168, which acts as the Proton acceptor. Position 169 (Asp-169) interacts with Ca(2+). His-173 provides a ligand contact to heme b. Ca(2+)-binding residues include Thr-221, Trp-223, Asp-225, and Ser-227. Positions 393, 490, and 494 each coordinate heme b.

It belongs to the peroxidase family. Heme b serves as cofactor. It depends on Ca(2+) as a cofactor.

The enzyme catalyses hexadecanoate + O2 = (2R)-2-hydroperoxyhexadecanoate. The catalysed reaction is dodecanoate + O2 = (2R)-2-hydroperoxydodecanoate. In terms of biological role, alpha-dioxygenase that catalyzes the primary oxygenation step of a variety of 14-20 carbon fatty acids, containing up to three unsaturated bonds, into their corresponding 2R-hydroperoxides. Involved in the production of oxylipins that function in cell signaling, wound healing, and protection from infection. The alpha-oxidation pathway of fatty acids may play a role during plant developmental processes. In Pisum sativum (Garden pea), this protein is Alpha-dioxygenase PIOX.